Here is a 145-residue protein sequence, read N- to C-terminus: Probable WRKY transcription factor 75 (145 aa).

Over residues 20–38 the composition is skewed to basic and acidic residues; sequence SKPELHQGEEESSKVRSEG. The segment at 20-55 is disordered; it reads SKPELHQGEEESSKVRSEGCSKSVESSKKKGKKQRY. A DNA-binding region (WRKY) is located at residues 61 to 126; sequence SQVDILDDGY…YEGVHSHPIE (66 aa).

The protein belongs to the WRKY group II-c family.

Its subcellular location is the nucleus. In terms of biological role, transcription factor. Interacts specifically with the W box (5'-(T)TGAC[CT]-3'), a frequently occurring elicitor-responsive cis-acting element. The protein is Probable WRKY transcription factor 75 (WRKY75) of Arabidopsis thaliana (Mouse-ear cress).